Consider the following 44-residue polypeptide: SPbeta prophage-derived uncharacterized protein YosI (44 aa).

This is SPbeta prophage-derived uncharacterized protein YosI (yosI) from Bacillus subtilis (strain 168).